Reading from the N-terminus, the 525-residue chain is Protein disulfide-isomerase A2 (525 aa).

An N-terminal signal peptide occupies residues 1 to 21 (MSCQLLPVLLLLLLRASCPWG). Residues 27 to 152 (RSPSEEPPEE…IAEWLRRRVG (126 aa)) form the Thioredoxin 1 domain. Active-site nucleophile residues include Cys71 and Cys74. The cysteines at positions 71 and 74 are disulfide-linked. Asn127 and Asn284 each carry an N-linked (GlcNAc...) asparagine glycan. The 130-residue stretch at 367–496 (VLNGQVKPYL…FSKFLDNGGV (130 aa)) folds into the Thioredoxin 2 domain. Active-site nucleophile residues include Cys418 and Cys421. Cys418 and Cys421 form a disulfide bridge. Residues 498–525 (PTEEPLEEPAAPFPEPPANSTMGSKEEL) are disordered. Asn516 carries N-linked (GlcNAc...) asparagine glycosylation. Residues 516-525 (NSTMGSKEEL) are compositionally biased toward polar residues. The Prevents secretion from ER motif lies at 522 to 525 (KEEL).

It belongs to the protein disulfide isomerase family. In terms of assembly, monomer; predominantly as monomer under reducing conditions. Homodimer; disulfide-linked. Part of a large chaperone multiprotein complex comprising DNAJB11, HSP90B1, HSPA5, HYOU, PDIA2, PDIA4, PDIA6, PPIB, SDF2L1, UGGT1 and very small amounts of ERP29, but not, or at very low levels, CALR nor CANX. Post-translationally, the disulfide-linked homodimer exhibits an enhanced chaperone activity. Glycosylated.

The protein localises to the endoplasmic reticulum lumen. It catalyses the reaction Catalyzes the rearrangement of -S-S- bonds in proteins.. Acts as an intracellular estrogen-binding protein. May be involved in modulating cellular levels and biological functions of estrogens in the pancreas. May act as a chaperone that inhibits aggregation of misfolded proteins. This Pongo abelii (Sumatran orangutan) protein is Protein disulfide-isomerase A2 (PDIA2).